A 180-amino-acid polypeptide reads, in one-letter code: Large ribosomal subunit protein uL6 (180 aa).

It belongs to the universal ribosomal protein uL6 family. In terms of assembly, part of the 50S ribosomal subunit.

Functionally, this protein binds to the 23S rRNA, and is important in its secondary structure. It is located near the subunit interface in the base of the L7/L12 stalk, and near the tRNA binding site of the peptidyltransferase center. The protein is Large ribosomal subunit protein uL6 of Thermus thermophilus (strain ATCC BAA-163 / DSM 7039 / HB27).